A 229-amino-acid chain; its full sequence is Ribonuclease 3 (229 aa).

In terms of domain architecture, RNase III spans 4 to 133 (WEELQESVGF…FIGALYLDNG (130 aa)). Glu-46 serves as a coordination point for Mg(2+). Asp-50 is an active-site residue. Positions 119 and 122 each coordinate Mg(2+). The active site involves Glu-122. In terms of domain architecture, DRBM spans 159–228 (DYKTQLQEIV…AQFAINQLTH (70 aa)).

Belongs to the ribonuclease III family. As to quaternary structure, homodimer. Requires Mg(2+) as cofactor.

It is found in the cytoplasm. The enzyme catalyses Endonucleolytic cleavage to 5'-phosphomonoester.. In terms of biological role, digests double-stranded RNA. Involved in the processing of primary rRNA transcript to yield the immediate precursors to the large and small rRNAs (23S and 16S). Processes some mRNAs, and tRNAs when they are encoded in the rRNA operon. Processes pre-crRNA and tracrRNA of type II CRISPR loci if present in the organism. The sequence is that of Ribonuclease 3 from Listeria monocytogenes serotype 4a (strain HCC23).